Reading from the N-terminus, the 372-residue chain is Cytochrome b (372 aa).

4 helical membrane passes run F25 to I45, W69 to I90, W105 to L125, and F170 to I190. Heme b contacts are provided by H75 and H89. Heme b-binding residues include H174 and H188. Residue H193 coordinates a ubiquinone. The next 4 helical transmembrane spans lie at Y218–S238, L280–H300, L312–T332, and F339–P358.

Belongs to the cytochrome b family. The cytochrome bc1 complex contains 3 respiratory subunits (MT-CYB, CYC1 and UQCRFS1), 2 core proteins (UQCRC1 and UQCRC2) and probably 6 low-molecular weight proteins. It depends on heme b as a cofactor.

The protein localises to the mitochondrion inner membrane. Its function is as follows. Component of the ubiquinol-cytochrome c reductase complex (complex III or cytochrome b-c1 complex) that is part of the mitochondrial respiratory chain. The b-c1 complex mediates electron transfer from ubiquinol to cytochrome c. Contributes to the generation of a proton gradient across the mitochondrial membrane that is then used for ATP synthesis. The protein is Cytochrome b (MT-CYB) of Dendroaspis polylepis polylepis (Black mamba).